A 195-amino-acid polypeptide reads, in one-letter code: MICGIDEAGRGPVVGPMVIAAVAGDGERLLQLGVRDSKTLSPTKREVIYARIIEVADCVNYVVVEPHIIDEYVRRRMLNSLELDFTARLIELCPAELYYVDSPDVNSRRYGDALSFITGRRVVALHGGESVPQVAAASIVAKVIRDRLIDILKREIGDFGSGYPSDVKTIEWLRLGKIPVECVRRSWRTLRYLNT.

Residues 1–195 (MICGIDEAGR…SWRTLRYLNT (195 aa)) enclose the RNase H type-2 domain. Aspartate 6, glutamate 7, and aspartate 101 together coordinate a divalent metal cation.

Belongs to the RNase HII family. Mn(2+) serves as cofactor. Mg(2+) is required as a cofactor.

The protein localises to the cytoplasm. It catalyses the reaction Endonucleolytic cleavage to 5'-phosphomonoester.. Functionally, endonuclease that specifically degrades the RNA of RNA-DNA hybrids. This Pyrobaculum islandicum (strain DSM 4184 / JCM 9189 / GEO3) protein is Ribonuclease HII.